Reading from the N-terminus, the 458-residue chain is MFRPEEIIETIKMIKMENLDLRTVTLGLSLRDCVSKDLDELKENIYNKITSSAENLVETAERISEKYGIPIVNKRIAVTPISLVIGGAIKDLDKEEQIKACVEVGEVLDKAAKKVRVDFLGGYSALVHKDATKEDRALIDSIPFMMEKTERVCSSVNVASTKTGINMDAVKRMGEIIKETAFRTEKAIGCAKLVVFANAPEDNPFMAGAFHGVGEGDKVINVGVSGPGVVRAVIEKLPDADFGTLANEIKKVAFKITRVGELIGREVSKELGVKFGVVDLSLAPTPARGDSIANILEAMGLEKCGTHGSTAALALLNDAVKKGGAMATSYVGGLSGAFIPVSEDSGMVEAVEAGALTLEKLEAMTCVCSVGIDMVAIPGDTPASTISAIIADEMAIGVINNKTTAVRIIPVPGKKAGEYVDYGGLLGKAPIMEVNKYSSEKFIKRGGRIPAPLQALTN.

It belongs to the UPF0210 family.

This is UPF0210 protein MJ1665 from Methanocaldococcus jannaschii (strain ATCC 43067 / DSM 2661 / JAL-1 / JCM 10045 / NBRC 100440) (Methanococcus jannaschii).